Here is a 339-residue protein sequence, read N- to C-terminus: Ribosome biogenesis protein BRX1 homolog (339 aa).

Residues 1 to 34 (MSAYKRKRGSLPEVATNTKKAKKQLAGSEQEATA) form a disordered region. One can recognise a Brix domain in the interval 53–242 (ERVLIFSSRG…LIKIFKGSFG (190 aa)). The interval 304–339 (AEEKPQVIETEPPAPKPKMKRKDKQFKRQRMAKKRM) is disordered. Positions 320–339 (PKMKRKDKQFKRQRMAKKRM) are enriched in basic residues.

This sequence belongs to the BRX1 family. Ubiquitous.

The protein localises to the nucleus. The protein resides in the nucleolus. Functionally, required for biogenesis of the 60S ribosomal subunit. The protein is Ribosome biogenesis protein BRX1 homolog (brix1) of Xenopus laevis (African clawed frog).